A 235-amino-acid polypeptide reads, in one-letter code: Glucosamine-6-phosphate deaminase (235 aa).

The active-site Proton acceptor; for enolization step is the Asp-62. Asn-128 serves as the catalytic For ring-opening step. The Proton acceptor; for ring-opening step role is filled by His-130. The active-site For ring-opening step is Glu-135.

The protein belongs to the glucosamine/galactosamine-6-phosphate isomerase family. NagB subfamily.

The enzyme catalyses alpha-D-glucosamine 6-phosphate + H2O = beta-D-fructose 6-phosphate + NH4(+). Its pathway is amino-sugar metabolism; N-acetylneuraminate degradation; D-fructose 6-phosphate from N-acetylneuraminate: step 5/5. Functionally, catalyzes the reversible isomerization-deamination of glucosamine 6-phosphate (GlcN6P) to form fructose 6-phosphate (Fru6P) and ammonium ion. This is Glucosamine-6-phosphate deaminase from Streptococcus pneumoniae serotype 2 (strain D39 / NCTC 7466).